A 124-amino-acid polypeptide reads, in one-letter code: Holo-[acyl-carrier-protein] synthase (124 aa).

2 residues coordinate Mg(2+): aspartate 8 and glutamate 58.

It belongs to the P-Pant transferase superfamily. AcpS family. The cofactor is Mg(2+).

It is found in the cytoplasm. The catalysed reaction is apo-[ACP] + CoA = holo-[ACP] + adenosine 3',5'-bisphosphate + H(+). In terms of biological role, transfers the 4'-phosphopantetheine moiety from coenzyme A to a Ser of acyl-carrier-protein. This Lacticaseibacillus casei (strain BL23) (Lactobacillus casei) protein is Holo-[acyl-carrier-protein] synthase.